The primary structure comprises 221 residues: Casparian strip membrane protein 3 (221 aa).

A compositionally biased stretch (basic and acidic residues) spans 1 to 12 (MDIEKAASRREE). A disordered region spans residues 1–28 (MDIEKAASRREEEEPIVQRPKLDKGKGK). Residues 1–58 (MDIEKAASRREEEEPIVQRPKLDKGKGKAHVFAPPMNYNRIMDKHKQEKVSAAGWKRG) are Cytoplasmic-facing. Residues 59 to 79 (VAIFDFVLRLIAAITAMAAAA) form a helical membrane-spanning segment. Topologically, residues 80–109 (KMATTEETLPFFTQFLQFQAEYTDLPTMSS) are extracellular. The chain crosses the membrane as a helical span at residues 110-130 (FVIVNSIVGGYLTLSLPFSIV). At 131–148 (CILRPLAVPPRLFLIICD) the chain is on the cytoplasmic side. A helical membrane pass occupies residues 149-169 (TAMMGLTMMAASASAAIVYLA). Topologically, residues 170 to 194 (HNGNSSSNWLPVCQQFGDFCQGTSG) are extracellular. Asn-173 carries an N-linked (GlcNAc...) asparagine glycan. The helical transmembrane segment at 195–215 (AVVASFIAATLLMFLVILSAF) threads the bilayer. Over 216–221 (ALKRST) the chain is Cytoplasmic.

It belongs to the Casparian strip membrane proteins (CASP) family. Homodimer and heterodimers.

The protein localises to the cell membrane. In terms of biological role, regulates membrane-cell wall junctions and localized cell wall deposition. Required for establishment of the Casparian strip membrane domain (CSD) and the subsequent formation of Casparian strips, a cell wall modification of the root endodermis that determines an apoplastic barrier between the intraorganismal apoplasm and the extraorganismal apoplasm and prevents lateral diffusion. The polypeptide is Casparian strip membrane protein 3 (Arabidopsis lyrata subsp. lyrata (Lyre-leaved rock-cress)).